The following is a 530-amino-acid chain: ATP-dependent RNA helicase DBP3 (530 aa).

Residues 1–20 (MSKDEIKDKKRKSEEYEVVD) show a composition bias toward basic and acidic residues. A disordered region spans residues 1–77 (MSKDEIKDKK…VASVSTSSTV (77 aa)). Positions 19–58 (VDKKKHKKDKKDKKEKKDKKEKKLKKDKKDKKDKKETKSE) form a coiled coil. The span at 21–50 (KKKHKKDKKDKKEKKDKKEKKLKKDKKDKK) shows a compositional bias: basic residues. Residues 67–77 (SVASVSTSSTV) show a composition bias toward low complexity. Residues 117–143 (LSFSHISLDSRIQAEISKFPKPTPIQA) carry the Q motif motif. Residues 146-322 (WPYLLAGKDV…STFMNSPIKV (177 aa)) form the Helicase ATP-binding domain. An ATP-binding site is contributed by 159-166 (AETGSGKT). The DEAD box signature appears at 269–272 (DEAD). In terms of domain architecture, Helicase C-terminal spans 351-500 (KLLELLKKYQ…PVPEELKKFG (150 aa)).

This sequence belongs to the DEAD box helicase family. DDX5/DBP2 subfamily.

The protein resides in the nucleus. It localises to the nucleolus. It catalyses the reaction ATP + H2O = ADP + phosphate + H(+). In terms of biological role, ATP-dependent RNA helicase required for 60S ribosomal subunit synthesis. Involved in efficient pre-rRNA processing, predominantly at site A3, which is necessary for the normal formation of 25S and 5.8S rRNAs. The polypeptide is ATP-dependent RNA helicase DBP3 (DBP3) (Vanderwaltozyma polyspora (strain ATCC 22028 / DSM 70294 / BCRC 21397 / CBS 2163 / NBRC 10782 / NRRL Y-8283 / UCD 57-17) (Kluyveromyces polysporus)).